The primary structure comprises 1072 residues: Integrin alpha-6 (1072 aa).

The N-terminal stretch at 1-18 is a signal peptide; that stretch reads MAAALLLYLPLLPGLAGA. Topologically, residues 19–1010 are extracellular; sequence FNLDAENVIG…FPAKPVALYT (992 aa). 7 FG-GAP repeats span residues 23 to 88, 94 to 160, 170 to 223, 238 to 295, 296 to 357, 358 to 413, and 414 to 476; these read AENV…DTRC, DEDT…IKDD, DGRL…FYDL, RQDK…QRAL, SLEH…KWEG, IKPI…GINT, and EPAQ…VQPD. N-linked (GlcNAc...) asparagine glycosylation is present at Asn71. Cystine bridges form between Cys79–Cys88, Cys125–Cys148, and Cys169–Cys182. Asn217 and Asn278 each carry an N-linked (GlcNAc...) asparagine glycan. Residues Asp318, Asn320, Asp322, and Asp326 each coordinate Ca(2+). N-linked (GlcNAc...) asparagine glycosylation is present at Asn364. Asp380, Asn382, Asp384, Tyr386, Asp388, Asp438, Asp440, Asn442, Tyr444, and Asp446 together coordinate Ca(2+). A disulfide bridge links Cys498 with Cys557. N-linked (GlcNAc...) asparagine glycans are attached at residues Asn515 and Asn609. 2 disulfides stabilise this stretch: Cys625/Cys631 and Cys725/Cys736. Residues Asn730, Asn747, and Asn780 are each glycosylated (N-linked (GlcNAc...) asparagine). Intrachain disulfides connect Cys880–Cys927 and Cys933–Cys938. Residue Asn957 is glycosylated (N-linked (GlcNAc...) asparagine). Residues 1011–1036 form a helical membrane-spanning segment; it reads GVPWWIIAVAIFAGVLMLALLVFLLW. The Cytoplasmic segment spans residues 1037-1072; sequence KCGFFKRSKKDHYDATYHKAEIHAQPSDKERLTSDA. The S-palmitoyl cysteine; by DHHC3 moiety is linked to residue Cys1038. Positions 1039–1043 match the GFFKR motif motif; the sequence is GFFKR. Phosphoserine; by CaMK2 is present on Ser1070.

It belongs to the integrin alpha chain family. Heterodimer of an alpha and a beta subunit. The alpha subunit is composed of a heavy and a light chain linked by a disulfide bond. Alpha-6 associates with either beta-1 (ITGB1) or beta-4 (ITGB4) to form ITGA6:ITGB1 and ITGA6:ITGB4, respectively. Post-translationally, phosphorylated in vivo.

The protein resides in the cell membrane. In terms of biological role, integrin alpha-6/beta-1 (ITGA6:ITGB1) is a receptor for laminin on platelets. Integrin alpha-6/beta-1 (ITGA6:ITGB1) is present in oocytes and is involved in sperm-egg fusion. Integrin alpha-6/beta-4 (ITGA6:ITGB4) is a receptor for laminin in epithelial cells and it plays a critical structural role in the hemidesmosome. The sequence is that of Integrin alpha-6 (ITGA6) from Gallus gallus (Chicken).